The primary structure comprises 142 residues: Large ribosomal subunit protein uL13 (142 aa).

This sequence belongs to the universal ribosomal protein uL13 family. Part of the 50S ribosomal subunit.

Its function is as follows. This protein is one of the early assembly proteins of the 50S ribosomal subunit, although it is not seen to bind rRNA by itself. It is important during the early stages of 50S assembly. The chain is Large ribosomal subunit protein uL13 from Bordetella petrii (strain ATCC BAA-461 / DSM 12804 / CCUG 43448).